The primary structure comprises 189 residues: Recombination protein RecR (189 aa).

The segment at 48–63 (CQTCFHLSAEPLCDIC) adopts a C4-type zinc-finger fold. The Toprim domain maps to 71 to 165 (QLLCVVADSR…QVSRIAYGLP (95 aa)).

Belongs to the RecR family.

May play a role in DNA repair. It seems to be involved in an RecBC-independent recombinational process of DNA repair. It may act with RecF and RecO. The sequence is that of Recombination protein RecR from Prochlorococcus marinus (strain MIT 9303).